A 229-amino-acid polypeptide reads, in one-letter code: Orotidine 5'-phosphate decarboxylase (229 aa).

Residues aspartate 10, lysine 32, 59-68 (DLKFHDIPNT), threonine 119, arginine 180, glutamine 189, glycine 209, and arginine 210 contribute to the substrate site. The active-site Proton donor is the lysine 61.

It belongs to the OMP decarboxylase family. Type 1 subfamily. In terms of assembly, homodimer.

It carries out the reaction orotidine 5'-phosphate + H(+) = UMP + CO2. Its pathway is pyrimidine metabolism; UMP biosynthesis via de novo pathway; UMP from orotate: step 2/2. Functionally, catalyzes the decarboxylation of orotidine 5'-monophosphate (OMP) to uridine 5'-monophosphate (UMP). This Legionella pneumophila (strain Lens) protein is Orotidine 5'-phosphate decarboxylase.